The sequence spans 535 residues: uncharacterized protein (535 aa).

Transmembrane regions (helical) follow at residues 7–27 (DFDV…AYLA) and 509–529 (GGAV…ACLA).

It localises to the cell membrane. This is an uncharacterized protein from Mycobacterium bovis (strain ATCC BAA-935 / AF2122/97).